The sequence spans 397 residues: Chorismate synthase (397 aa).

The NADP(+) site is built by Arg40 and Arg46. Residues 129–131 (RSS), 257–258 (QA), Gly302, 317–321 (KPISS), and Arg343 contribute to the FMN site.

Belongs to the chorismate synthase family. In terms of assembly, homotetramer. FMNH2 is required as a cofactor.

The enzyme catalyses 5-O-(1-carboxyvinyl)-3-phosphoshikimate = chorismate + phosphate. Its pathway is metabolic intermediate biosynthesis; chorismate biosynthesis; chorismate from D-erythrose 4-phosphate and phosphoenolpyruvate: step 7/7. In terms of biological role, catalyzes the anti-1,4-elimination of the C-3 phosphate and the C-6 proR hydrogen from 5-enolpyruvylshikimate-3-phosphate (EPSP) to yield chorismate, which is the branch point compound that serves as the starting substrate for the three terminal pathways of aromatic amino acid biosynthesis. This reaction introduces a second double bond into the aromatic ring system. This is Chorismate synthase from Chlorobium phaeovibrioides (strain DSM 265 / 1930) (Prosthecochloris vibrioformis (strain DSM 265)).